A 286-amino-acid chain; its full sequence is Polyamine aminopropyltransferase (286 aa).

The PABS domain occupies 1-235 (MSDYQETLYE…GAMTFAWGAT (235 aa)). Gln30 provides a ligand contact to S-methyl-5'-thioadenosine. Spermidine-binding residues include His61 and Asp85. Residues Glu105 and 137 to 138 (DG) contribute to the S-methyl-5'-thioadenosine site. The active-site Proton acceptor is the Asp155. 155–158 (DSTD) serves as a coordination point for spermidine. Pro162 contributes to the S-methyl-5'-thioadenosine binding site.

Belongs to the spermidine/spermine synthase family. As to quaternary structure, homodimer or homotetramer.

It localises to the cytoplasm. The enzyme catalyses S-adenosyl 3-(methylsulfanyl)propylamine + putrescine = S-methyl-5'-thioadenosine + spermidine + H(+). It participates in amine and polyamine biosynthesis; spermidine biosynthesis; spermidine from putrescine: step 1/1. Catalyzes the irreversible transfer of a propylamine group from the amino donor S-adenosylmethioninamine (decarboxy-AdoMet) to putrescine (1,4-diaminobutane) to yield spermidine. The protein is Polyamine aminopropyltransferase of Pseudomonas syringae pv. tomato (strain ATCC BAA-871 / DC3000).